The chain runs to 178 residues: MPSNALWLRADQLSSVSPAVLDWLFDEGSLTRRLTALADGAFRVEPLLEGWQTLRDDECQGLDVPTGSSGWVREVYLHGHDRPWVFARSVAARSALEGSGFDLALLGTRSLGELLFSDSAFERGPIEVCRYPAAGLPAEVRAEGLWGRRSRFSRGALGVLVAEVYLPRLWDQAGIADV.

Substrate-binding residues include Arg73, Leu111, and Glu163.

The protein belongs to the UbiC family.

The protein localises to the cytoplasm. It catalyses the reaction chorismate = 4-hydroxybenzoate + pyruvate. The protein operates within cofactor biosynthesis; ubiquinone biosynthesis. Removes the pyruvyl group from chorismate, with concomitant aromatization of the ring, to provide 4-hydroxybenzoate (4HB) for the ubiquinone pathway. The sequence is that of Probable chorismate pyruvate-lyase from Pseudomonas aeruginosa (strain ATCC 15692 / DSM 22644 / CIP 104116 / JCM 14847 / LMG 12228 / 1C / PRS 101 / PAO1).